The following is a 676-amino-acid chain: PAS domain-containing protein cky-1 (676 aa).

Low complexity predominate over residues 45–72 (SALNNNSINVPNNNTMGMSSAGSSNGSN). A disordered region spans residues 45–89 (SALNNNSINVPNNNTMGMSSAGSSNGSNLVNGQQRSTRGASKQRR). Positions 73–84 (LVNGQQRSTRGA) are enriched in polar residues. The segment at 76–89 (GQQRSTRGASKQRR) is basic motif. The region spanning 76-129 (GQQRSTRGASKQRRDQINVEIQKLRDLLPLSDLIKDRLFQLQVMSLGCIFIRKH) is the bHLH domain. The tract at residues 90-129 (DQINVEIQKLRDLLPLSDLIKDRLFQLQVMSLGCIFIRKH) is helix-loop-helix motif. In terms of domain architecture, PAS spans 165-215 (MLMVTRSGKILHVSDNASEYLGHSVEEIMCQGDSIYDLVDGRDHGAVQAEL). Residues 436 to 462 (FSCQDSPPPSEEQQPSSPQTPPFTEQP) are disordered.

Heterodimer; efficient DNA binding requires dimerization with another bHLH protein. Forms a heterodimer with ARNT homolog aha-1; binds DNA as heterodimer.

Its subcellular location is the nucleus. In terms of biological role, transcription factor. Efficient DNA binding requires dimerization with another bHLH protein, such as ARNT homolog aha-1. Regulates transcription of target genes, probably acting in complex with aha-1. This chain is PAS domain-containing protein cky-1, found in Caenorhabditis elegans.